The primary structure comprises 655 residues: Bifunctional lysine-specific demethylase and histidyl-hydroxylase NO66 (655 aa).

Positions 1-16 are enriched in polar residues; the sequence is MEKVTNSAAAKPQGNN. Disordered regions lie at residues 1 to 48 and 67 to 122; these read MEKV…LSDM and EDTD…QGAS. Residues 76 to 86 are compositionally biased toward low complexity; the sequence is STSSKEAAAAK. Residues 87 to 96 are compositionally biased toward basic and acidic residues; the sequence is TADHERRLQA. Ser-131 is subject to Phosphoserine. A Phosphothreonine modification is found at Thr-137. Phosphoserine is present on Ser-138. The interval 185 to 210 is disordered; that stretch reads KAPEEGNNNNDEKEMSTETSEPHKTD. Residues 194 to 210 are compositionally biased toward basic and acidic residues; sequence NDEKEMSTETSEPHKTD. The 146-residue stretch at 307 to 452 folds into the JmjC domain; that stretch reads CSIRLLHASA…NLLETLMPMV (146 aa). The Fe cation site is built by His-353, Asp-355, and His-418.

The protein belongs to the ROX family. NO66 subfamily. Fe(2+) is required as a cofactor.

The protein resides in the nucleus. It catalyses the reaction N(6),N(6)-dimethyl-L-lysyl(36)-[histone H3] + 2 2-oxoglutarate + 2 O2 = L-lysyl(36)-[histone H3] + 2 formaldehyde + 2 succinate + 2 CO2. Functionally, oxygenase that can act as both a histone lysine demethylase and a ribosomal histidine hydroxylase. Specifically demethylates 'Lys-4' (H3K4me) and 'Lys-36' (H3K36me) of histone H3, thereby playing a central role in histone code. The sequence is that of Bifunctional lysine-specific demethylase and histidyl-hydroxylase NO66 from Drosophila sechellia (Fruit fly).